We begin with the raw amino-acid sequence, 313 residues long: Malate dehydrogenase (313 aa).

NAD(+)-binding positions include 11–16 (GAGNIG) and aspartate 35. Residues arginine 86 and arginine 92 each contribute to the substrate site. NAD(+)-binding positions include asparagine 99 and 122 to 124 (ISN). 2 residues coordinate substrate: asparagine 124 and arginine 155. Residue histidine 179 is the Proton acceptor of the active site.

It belongs to the LDH/MDH superfamily. MDH type 3 family.

The enzyme catalyses (S)-malate + NAD(+) = oxaloacetate + NADH + H(+). Catalyzes the reversible oxidation of malate to oxaloacetate. This chain is Malate dehydrogenase, found in Sorangium cellulosum (strain So ce56) (Polyangium cellulosum (strain So ce56)).